The primary structure comprises 419 residues: GTPase Obg (419 aa).

The Obg domain maps to 1–156; that stretch reads MRFVDYVSIE…FYLDLQLKVM (156 aa). The 178-residue stretch at 157 to 334 folds into the OBG-type G domain; sequence ADIGLVGKPN…LEEKQKKLEI (178 aa). Residues 163-170, 188-192, 209-212, 278-281, and 315-317 contribute to the GTP site; these read GKPNAGKS, FTTLV, DLPG, NKCD, and NII. Ser-170 and Thr-190 together coordinate Mg(2+). Residues 342 to 419 enclose the OCT domain; the sequence is IEFNLKAPFL…RIYEFEFHWN (78 aa).

Belongs to the TRAFAC class OBG-HflX-like GTPase superfamily. OBG GTPase family. In terms of assembly, monomer. Mg(2+) is required as a cofactor.

It localises to the cytoplasm. An essential GTPase which binds GTP, GDP and possibly (p)ppGpp with moderate affinity, with high nucleotide exchange rates and a fairly low GTP hydrolysis rate. Plays a role in control of the cell cycle, stress response, ribosome biogenesis and in those bacteria that undergo differentiation, in morphogenesis control. This chain is GTPase Obg, found in Mesomycoplasma hyopneumoniae (strain 232) (Mycoplasma hyopneumoniae).